We begin with the raw amino-acid sequence, 473 residues long: Cannabinoid receptor 1 (473 aa).

Residues 1–118 (MKSILDGLAD…CFMILTASQQ (118 aa)) are Extracellular-facing. Residues 2-23 (KSILDGLADTTFRTITTDLLYM) are required for mitochondrial localization. N-linked (GlcNAc...) asparagine glycosylation is found at Asn79 and Asn85. Residues 119–144 (LIIAVLSLTLGTFTVLENFLVLCVIL) traverse the membrane as a helical segment. At 145 to 156 (QSRTLRCRPSYH) the chain is on the cytoplasmic side. The helical transmembrane segment at 157-177 (FIGSLAVADLLGSVIFVYSFL) threads the bilayer. At 178–189 (DFHVFHRKDSSN) the chain is on the extracellular side. The chain crosses the membrane as a helical span at residues 190–214 (VFLFKLGGVTASFTASVGSLFLTAI). Over 215–234 (DRYISIHRPLAYKRIVTRTK) the chain is Cytoplasmic. Residues 235–257 (AVIAFCVMWTIAIIIAVLPLLGW) form a helical membrane-spanning segment. Residues 258–275 (NCKKLKSVCSDIFPLIDE) are Extracellular-facing. A helical membrane pass occupies residues 276–301 (NYLMFWIGVTSILLLFIVYAYVYILW). Over 302 to 346 (KAHSHAVRMLQRGTQKSIIIHTSEDGKVQITRPEQTRMDIRLAKT) the chain is Cytoplasmic. The helical transmembrane segment at 347–367 (LVLILVVLIICWGPLLAIMVY) threads the bilayer. Over 368–379 (DVFGKMNNPIKT) the chain is Extracellular. Residues 380 to 401 (VFAFCSMLCLMDSTVNPIIYAL) form a helical membrane-spanning segment. Residues 402 to 473 (RSQDLRHAFL…VSTETSGEAV (72 aa)) lie on the Cytoplasmic side of the membrane. A lipid anchor (S-palmitoyl cysteine) is attached at Cys417.

Belongs to the G-protein coupled receptor 1 family. Palmitoylation at Cys-417 is important for recruitment at both plasma membrane and lipid rafts and association with G protein alpha subunits.

It is found in the cell membrane. The protein resides in the mitochondrion outer membrane. The protein localises to the cell projection. It localises to the axon. Its subcellular location is the presynapse. Its activity is regulated as follows. Hemopressin, a peptide derived from hemoglobin subunit alpha (HBA1 and/or HBA2), acts as an antagonist peptide: hemopressin-binding efficiently blocks cannabinoid receptor CNR1 and subsequent signaling. G-protein coupled receptor for cannabinoids. Mediates many cannabinoid-induced effects in the central nervous system (CNS), as well as in peripheral tissues. Regulates cellular respiration and energy production in response to cannabinoids. Signaling typically involves reduction in cyclic AMP. The chain is Cannabinoid receptor 1 (CNR1) from Taricha granulosa (Roughskin newt).